Reading from the N-terminus, the 145-residue chain is Ribonuclease H (145 aa).

Residues 1-142 form the RNase H type-1 domain; that stretch reads MDTPVYLYTD…ADDLANRGAA (142 aa). D10, E48, D70, and D134 together coordinate Mg(2+).

Belongs to the RNase H family. Monomer. It depends on Mg(2+) as a cofactor.

Its subcellular location is the cytoplasm. It carries out the reaction Endonucleolytic cleavage to 5'-phosphomonoester.. Functionally, endonuclease that specifically degrades the RNA of RNA-DNA hybrids. The protein is Ribonuclease H of Neisseria gonorrhoeae (strain ATCC 700825 / FA 1090).